A 101-amino-acid polypeptide reads, in one-letter code: Small ribosomal subunit protein uS14 (101 aa).

Belongs to the universal ribosomal protein uS14 family. In terms of assembly, part of the 30S ribosomal subunit. Contacts proteins S3 and S10.

In terms of biological role, binds 16S rRNA, required for the assembly of 30S particles and may also be responsible for determining the conformation of the 16S rRNA at the A site. In Chlamydia caviae (strain ATCC VR-813 / DSM 19441 / 03DC25 / GPIC) (Chlamydophila caviae), this protein is Small ribosomal subunit protein uS14.